We begin with the raw amino-acid sequence, 107 residues long: Translation initiation factor IF-1, chloroplastic (107 aa).

In terms of domain architecture, S1-like spans Arg8–Pro83.

Belongs to the IF-1 family. As to quaternary structure, component of the 30S ribosomal translation pre-initiation complex which assembles on the 30S ribosome in the order IF-2 and IF-3, IF-1 and N-formylmethionyl-tRNA(fMet); mRNA recruitment can occur at any time during PIC assembly.

It is found in the plastid. Its subcellular location is the chloroplast. In terms of biological role, one of the essential components for the initiation of protein synthesis. Stabilizes the binding of IF-2 and IF-3 on the 30S subunit to which N-formylmethionyl-tRNA(fMet) subsequently binds. Helps modulate mRNA selection, yielding the 30S pre-initiation complex (PIC). Upon addition of the 50S ribosomal subunit IF-1, IF-2 and IF-3 are released leaving the mature 70S translation initiation complex. The sequence is that of Translation initiation factor IF-1, chloroplastic from Lolium perenne (Perennial ryegrass).